The chain runs to 317 residues: Melanocyte-stimulating hormone receptor (317 aa).

At Met-1–Glu-37 the chain is on the extracellular side. N-linked (GlcNAc...) asparagine glycans are attached at residues Asn-15 and Asn-29. A helical transmembrane segment spans residues Val-38–Ile-63. Residues Ala-64 to Pro-72 are Cytoplasmic-facing. A helical transmembrane segment spans residues Met-73–Leu-93. The Extracellular portion of the chain corresponds to Glu-94–Asp-118. The chain crosses the membrane as a helical span at residues Ile-119–Val-140. Over Asp-141 to Arg-163 the chain is Cytoplasmic. A helical transmembrane segment spans residues Ala-164–Tyr-183. Residues Asn-184 to Cys-191 are Extracellular-facing. A helical transmembrane segment spans residues Leu-192–Leu-211. At Ala-212–Ala-240 the chain is on the cytoplasmic side. A helical transmembrane segment spans residues Ala-241–Leu-266. At Cys-267 to Asn-279 the chain is on the extracellular side. A helical membrane pass occupies residues Phe-280–Phe-300. The Cytoplasmic portion of the chain corresponds to Arg-301 to Trp-317. The S-palmitoyl cysteine moiety is linked to residue Cys-315.

The protein belongs to the G-protein coupled receptor 1 family. In terms of assembly, interacts with MGRN1, but does not undergo MGRN1-mediated ubiquitination; this interaction competes with GNAS-binding and thus inhibits agonist-induced cAMP production. Interacts with OPN3; the interaction results in a decrease in MC1R-mediated cAMP signaling and ultimately a decrease in melanin production in melanocytes.

It is found in the cell membrane. In terms of biological role, receptor for MSH (alpha, beta and gamma) and ACTH. The activity of this receptor is mediated by G proteins which activate adenylate cyclase. Mediates melanogenesis, the production of eumelanin (black/brown) and phaeomelanin (red/yellow), via regulation of cAMP signaling in melanocytes. In Canis lupus familiaris (Dog), this protein is Melanocyte-stimulating hormone receptor (MC1R).